Consider the following 1318-residue polypeptide: MLDVNFFDELRIGLASAEDIRNWSYGEVKKPETINYRTLKPEKDGLFCEKIFGPTRDWECYCGKYKRVRFKGIICERCGVEVTRAKVRRERMGHIELAAPVTHIWYFKGVPSRLGYLLDLAPKDLEKIIYFAAYVIVGVDEELRHNELSTLEAEMQVEKKTVADQRDADLEARAQKLEADIAELEAEGAKSDVRRKVKDGGEREMRQLRDRAQRELDRLDEIWTTFTKLSVKQLIIDELLYRELVDRYGEYFTGAMGAESIQILMQNFDLDAEAESLRETIRSGKGQKKLRALKRLKVVAAFQTNGNSPMGMVLNAVPVIPPELRPMVQLDGGRFATSDLNDLYRRVINRNNRLKRLIDLGAPEIIVNNEKRMLQESVDALFDNGRRGRPVTGPGNRPLKSLSDLLKGKQGRFRQNLLGKRVDYSGRSVIVVGPQLKLHQCGLPKLMALELFKPFVMKRLVDLNHAQNIKSAKRMVERKRVQVWDVLEEVIAEHPVLLNRAPTLHRLGIQAFEPQLVEGKAIQLHPLVCEAFNADFDGDQMAVHLPLSAEAQAEARILMLSSNNILSPASGRPLAMPRLDMVTGLFHLTRLDEGVTGELVAPTNDEAEQGVYSSPAEAQMAVDRGALSVQAQIKVRLTQQRPPRDLENELFPEGWKYGDGWTATTTLGRVLFNELLPADYPFVNEQMPKKRQATIINDLAERYPMIVVAQTVDKLKDVGFYWATRSGVTVSISDVLVPPEKPAIIEDFEAQADKIEKQYQRGALDKKERNSALVTIWQEATDKVGKAMEAHFPDSNPIPMIVKSGAAGNMTQVRSLAGMKGLVTNPKGEFIPRPIKSSFKEGLTVLEYFINTHGARKGLADTALRTADSGYLTRRLVDVSQDVIVREVDCGTERGIVTTIAEKQADGTMIRDAHVETSTYARTLAADAVDANGTVIVERGHDLGDPAIDALLEAGITTVKVRSVLTCTTGTGVCATCYGRSMATGKLVDIGEAVGIVAAQSIGEPGTQLTMRTFHQGGVAGDDITGGLPRVQELFEARVPKGKAPIADVTGRVQLEDGDRFYKITIVPDDGGEEVVYDKLSKRQRLRVFKHADGRESLLADGDHVEVGQQLMEGAADPHEVLRVMGPRQVQIHLVNEVQEVYRSQGVSIHDKHIEVIVRQMLRRVTIIDSGATEFLPGSLTERAEFESANRRVVAEGGEPAAGRPVLMGITKASLATDSWLSAASFQETTRVLTDAAINCRSDKLIGLKENVIIGKLIPAGTGINRYRNIQVQPTEEARAAAYAVPSYDDQYYSPDGFGQNTGAAVPLDDYGFSNDYR.

Residues cysteine 60, cysteine 62, cysteine 75, and cysteine 78 each coordinate Zn(2+). Residues aspartate 535, aspartate 537, and aspartate 539 each coordinate Mg(2+). 4 residues coordinate Zn(2+): cysteine 890, cysteine 967, cysteine 974, and cysteine 977.

Belongs to the RNA polymerase beta' chain family. In terms of assembly, the RNAP catalytic core consists of 2 alpha, 1 beta, 1 beta' and 1 omega subunit. When a sigma factor is associated with the core the holoenzyme is formed, which can initiate transcription. It depends on Mg(2+) as a cofactor. Requires Zn(2+) as cofactor.

It carries out the reaction RNA(n) + a ribonucleoside 5'-triphosphate = RNA(n+1) + diphosphate. Its function is as follows. DNA-dependent RNA polymerase catalyzes the transcription of DNA into RNA using the four ribonucleoside triphosphates as substrates. This chain is DNA-directed RNA polymerase subunit beta', found in Rhodococcus erythropolis (strain PR4 / NBRC 100887).